We begin with the raw amino-acid sequence, 541 residues long: Glutamyl-tRNA(Gln) amidotransferase subunit B, mitochondrial (541 aa).

This sequence belongs to the GatB/GatE family. GatB subfamily. In terms of assembly, subunit of the heterotrimeric GatFAB amidotransferase (AdT) complex, composed of A, B and F subunits.

The protein localises to the mitochondrion. It carries out the reaction L-glutamyl-tRNA(Gln) + L-glutamine + ATP + H2O = L-glutaminyl-tRNA(Gln) + L-glutamate + ADP + phosphate + H(+). Allows the formation of correctly charged Gln-tRNA(Gln) through the transamidation of misacylated Glu-tRNA(Gln) in the mitochondria. The reaction takes place in the presence of glutamine and ATP through an activated gamma-phospho-Glu-tRNA(Gln). This is Glutamyl-tRNA(Gln) amidotransferase subunit B, mitochondrial from Saccharomyces cerevisiae (strain YJM789) (Baker's yeast).